The sequence spans 116 residues: Putative serine proteinase inhibitor 2 homolog first part (116 aa).

Belongs to the serpin family. Poxviruses subfamily.

This Vaccinia virus (strain Copenhagen) (VACV) protein is Putative serine proteinase inhibitor 2 homolog first part.